Consider the following 654-residue polypeptide: Tetracycline resistance protein TetQ (654 aa).

The 244-residue stretch at 1-244 (MNIINLGILA…AISSFILPPE (244 aa)) folds into the tr-type G domain. Residues 10–17 (AHIDAGKT), 74–78 (DTPGH), and 128–131 (NKID) each bind GTP.

This sequence belongs to the TRAFAC class translation factor GTPase superfamily. Classic translation factor GTPase family. TetM/TetO subfamily.

In terms of biological role, abolishes the inhibitory effect of tetracyclin on protein synthesis by a non-covalent modification of the ribosomes. The sequence is that of Tetracycline resistance protein TetQ (tetQ) from Prevotella intermedia.